We begin with the raw amino-acid sequence, 475 residues long: tRNA-2-methylthio-N(6)-dimethylallyladenosine synthase (475 aa).

Residues 1-21 (MTTAPTSPALPASSDTAPTGP) are disordered. Residues 24 to 145 (RGLHVITWGC…LPEMVARAAR (122 aa)) form the MTTase N-terminal domain. Positions 33, 69, 108, 186, 190, and 193 each coordinate [4Fe-4S] cluster. Positions 172–404 (TQGNLTAFLT…QALLREQQDA (233 aa)) constitute a Radical SAM core domain. In terms of domain architecture, TRAM spans 407–469 (ADMVGTVQEI…TNSLGGTLIR (63 aa)).

The protein belongs to the methylthiotransferase family. MiaB subfamily. Monomer. [4Fe-4S] cluster serves as cofactor.

The protein localises to the cytoplasm. The catalysed reaction is N(6)-dimethylallyladenosine(37) in tRNA + (sulfur carrier)-SH + AH2 + 2 S-adenosyl-L-methionine = 2-methylsulfanyl-N(6)-dimethylallyladenosine(37) in tRNA + (sulfur carrier)-H + 5'-deoxyadenosine + L-methionine + A + S-adenosyl-L-homocysteine + 2 H(+). Catalyzes the methylthiolation of N6-(dimethylallyl)adenosine (i(6)A), leading to the formation of 2-methylthio-N6-(dimethylallyl)adenosine (ms(2)i(6)A) at position 37 in tRNAs that read codons beginning with uridine. The chain is tRNA-2-methylthio-N(6)-dimethylallyladenosine synthase from Gluconobacter oxydans (strain 621H) (Gluconobacter suboxydans).